Reading from the N-terminus, the 172-residue chain is MDWLYVGKIANTHGLKGEVKILAATDFPEERFKKGNTLFLDVDGTKQEMTITTYRPHKQFHLVTFKGFDNINLIEKYKGLKLYVHAEHVHDLDEHEFYYHEIIGCEAVVDGEVIGVVDDIFETNGANDVWVIKRPGKSDALIPYIESVVQEIDVDAKRVVITPIPGMIDDED.

A PRC barrel domain is found at 93-167; it reads DEHEFYYHEI…RVVITPIPGM (75 aa).

Belongs to the RimM family. In terms of assembly, binds ribosomal protein uS19.

The protein resides in the cytoplasm. An accessory protein needed during the final step in the assembly of 30S ribosomal subunit, possibly for assembly of the head region. Essential for efficient processing of 16S rRNA. May be needed both before and after RbfA during the maturation of 16S rRNA. It has affinity for free ribosomal 30S subunits but not for 70S ribosomes. The polypeptide is Ribosome maturation factor RimM (Exiguobacterium sp. (strain ATCC BAA-1283 / AT1b)).